Here is a 204-residue protein sequence, read N- to C-terminus: Viral interleukin-6 homolog (204 aa).

Positions 1–22 are cleaved as a signal peptide; it reads MRWFKLWSILLVGSLLVSGTRG.

This sequence belongs to the IL-6 superfamily. In terms of assembly, interacts with host IL6ST.

Initiates signal transduction through binding to interleukin-6 receptor subunit beta IL6ST, independently of the cognate IL6 receptor IL6R. In infected primary effusion lymphoma cells, promotes proliferation of cells, protects them from apoptosis, and promotes immune evasion of interferon activity. Also drives blood to lymphatic endothelial cell differentiation. In Homo sapiens (Human), this protein is Viral interleukin-6 homolog (K2).